The following is a 392-amino-acid chain: GTPase Obg (392 aa).

Residues 1-159 (MKFVDEATIK…RELRLELLLL (159 aa)) enclose the Obg domain. Positions 160–333 (ADVGMLGLPN…VCNELSDFMD (174 aa)) constitute an OBG-type G domain. GTP-binding positions include 166–173 (GLPNAGKS), 191–195 (FTTLI), 213–216 (DIPG), 283–286 (NKTD), and 314–316 (AAV). 2 residues coordinate Mg(2+): S173 and T193. Positions 364–392 (GKNVVTEDGDDDDDWDDEEDDGHVIYARD) are disordered. Acidic residues predominate over residues 370 to 384 (EDGDDDDDWDDEEDD).

This sequence belongs to the TRAFAC class OBG-HflX-like GTPase superfamily. OBG GTPase family. In terms of assembly, monomer. Mg(2+) is required as a cofactor.

Its subcellular location is the cytoplasm. Its function is as follows. An essential GTPase which binds GTP, GDP and possibly (p)ppGpp with moderate affinity, with high nucleotide exchange rates and a fairly low GTP hydrolysis rate. Plays a role in control of the cell cycle, stress response, ribosome biogenesis and in those bacteria that undergo differentiation, in morphogenesis control. This Aliivibrio salmonicida (strain LFI1238) (Vibrio salmonicida (strain LFI1238)) protein is GTPase Obg.